The primary structure comprises 149 residues: Transcriptional repressor NrdR (149 aa).

A zinc finger lies at 3–34; it reads CPFCSATDTKVIDSRLVADGHQVRRRRECVQC. In terms of domain architecture, ATP-cone spans 49-139; that stretch reads PRVVKQDGSR…VYRAFEDVSE (91 aa).

The protein belongs to the NrdR family. Zn(2+) is required as a cofactor.

In terms of biological role, negatively regulates transcription of bacterial ribonucleotide reductase nrd genes and operons by binding to NrdR-boxes. The sequence is that of Transcriptional repressor NrdR from Shewanella halifaxensis (strain HAW-EB4).